Consider the following 236-residue polypeptide: MSNLDTQSIINTISNSKKQTPVRVFIAGEKLYQLQIPNEIEAFISPTSGTLFGEWKYVKALLESSSQITHYRVENDSRNSAVPLLDKKEVNARIEPGAIIRDQVLIGNNAVIMMGAIINIGAEIGAETMIDMGVVLGGRALVGRHCHIGAGAVLAGVIEPASAQPVQIDDHVLIGANAVVVEGVHVGTGAVVAAGAVVTKDVPAHTVVAGVPAQIIKRVDNTTSQKTALEDGLRNL.

The protein belongs to the transferase hexapeptide repeat family. DapH subfamily.

It carries out the reaction (S)-2,3,4,5-tetrahydrodipicolinate + acetyl-CoA + H2O = L-2-acetamido-6-oxoheptanedioate + CoA. The protein operates within amino-acid biosynthesis; L-lysine biosynthesis via DAP pathway; LL-2,6-diaminopimelate from (S)-tetrahydrodipicolinate (acetylase route): step 1/3. Catalyzes the transfer of an acetyl group from acetyl-CoA to tetrahydrodipicolinate. In Pediococcus pentosaceus (strain ATCC 25745 / CCUG 21536 / LMG 10740 / 183-1w), this protein is 2,3,4,5-tetrahydropyridine-2,6-dicarboxylate N-acetyltransferase.